The following is a 110-amino-acid chain: Acylphosphatase (110 aa).

Residues 24–110 form the Acylphosphatase-like domain; that stretch reads RVRVYVSGRV…SGGARGFEVR (87 aa). Active-site residues include arginine 39 and asparagine 57.

It belongs to the acylphosphatase family.

The catalysed reaction is an acyl phosphate + H2O = a carboxylate + phosphate + H(+). This Rubrobacter xylanophilus (strain DSM 9941 / JCM 11954 / NBRC 16129 / PRD-1) protein is Acylphosphatase (acyP).